Here is a 462-residue protein sequence, read N- to C-terminus: HEPACAM family member 2 (462 aa).

An N-terminal signal peptide occupies residues 1–31 (MGQDAFMEPFGDTLGVFQCKIYLLLFGACSG). N85, N129, and N165 each carry an N-linked (GlcNAc...) asparagine glycan. Ig-like C2-type domains lie at 149 to 233 (PVVQ…SDII) and 235 to 331 (PIIY…THFT). 2 disulfide bridges follow: C170–C219 and C270–C315. A glycan (N-linked (GlcNAc...) asparagine) is linked at N320. A helical transmembrane segment spans residues 352 to 372 (LASITGISLFLIISMCLLFLW). At 373 to 462 (KKYQPYKVIK…IPAQQQDHPE (90 aa)) the chain is on the cytoplasmic side.

Poly-ADP-ribosylated (PARsylated) by tankyrase TNKS during late G2 and prophase, leading to translocation to mitotic centrosomes. In terms of processing, N-glycosylated. Widely expressed.

It localises to the golgi apparatus membrane. The protein resides in the cytoplasm. Its subcellular location is the cytoskeleton. It is found in the spindle. The protein localises to the microtubule organizing center. It localises to the centrosome. The protein resides in the midbody. Functionally, required during prometaphase for centrosome maturation. Following poly-ADP-ribosylation (PARsylation) by TNKS, translocates from the Golgi apparatus to mitotic centrosomes and plays a key role in the formation of robust microtubules for prompt movement of chromosomes: anchors AKAP9/CG-NAP, a scaffold protein of the gamma-tubulin ring complex and promotes centrosome maturation. The protein is HEPACAM family member 2 (HEPACAM2) of Homo sapiens (Human).